The following is a 257-amino-acid chain: Small ribosomal subunit protein uS15m (257 aa).

A mitochondrion-targeting transit peptide spans 1–57; that stretch reads MLRAAWRALSSVRVQAVTQAPVPALRARSSASLPSARCGLQTPSLLNAARAYAVQKP. The interval 228-257 is disordered; that stretch reads KAAAAAAKKEKRERVPENPSNALPEKTKEN. Residues 234–243 show a composition bias toward basic and acidic residues; it reads AKKEKRERVP.

Belongs to the universal ribosomal protein uS15 family. In terms of assembly, component of the mitochondrial ribosome small subunit (28S) which comprises a 12S rRNA and about 30 distinct proteins. Interacts with METTL17.

Its subcellular location is the mitochondrion matrix. This chain is Small ribosomal subunit protein uS15m (Mrps15), found in Rattus norvegicus (Rat).